Here is a 386-residue protein sequence, read N- to C-terminus: Antilisterial bacteriocin subtilosin biosynthesis protein AlbE (386 aa).

In terms of biological role, involved in the production of the bacteriocin subtilosin. In Bacillus subtilis (strain 168), this protein is Antilisterial bacteriocin subtilosin biosynthesis protein AlbE (albE).